A 549-amino-acid polypeptide reads, in one-letter code: Chaperonin GroEL (549 aa).

ATP-binding positions include 29 to 32 (TAGP), K50, 86 to 90 (DGTTT), G417, and D499.

It belongs to the chaperonin (HSP60) family. Forms a cylinder of 14 subunits composed of two heptameric rings stacked back-to-back. Interacts with the co-chaperonin GroES.

Its subcellular location is the cytoplasm. The enzyme catalyses ATP + H2O + a folded polypeptide = ADP + phosphate + an unfolded polypeptide.. Its function is as follows. Together with its co-chaperonin GroES, plays an essential role in assisting protein folding. The GroEL-GroES system forms a nano-cage that allows encapsulation of the non-native substrate proteins and provides a physical environment optimized to promote and accelerate protein folding. The chain is Chaperonin GroEL from Anaplasma marginale (strain Florida).